Consider the following 396-residue polypeptide: Protein nipi-4 (396 aa).

Topologically, residues 1-20 are extracellular; it reads MELDHTPPPSVLNDNCSASY. The N-linked (GlcNAc...) asparagine glycan is linked to Asn-15. A helical membrane pass occupies residues 21–41; the sequence is MTPYATVIAMSGLYLLAIFYF. Over 42–396 the chain is Cytoplasmic; the sequence is CKKSKKMCQP…EHHCQSVIHY (355 aa). In terms of domain architecture, Protein kinase spans 81-368; it reads EVDDFQIGQT…SRLSELHHIV (288 aa). ATP-binding positions include 87–95 and Lys-111; that span reads IGQTADGFI.

It belongs to the protein kinase superfamily. Tyr protein kinase family. Expressed in the epidermis of larvae and adults and in vulval and rectal cells.

The protein resides in the membrane. Functionally, pseudokinase which plays a role in resistance to fungal infection by promoting expression of antimicrobial peptides (nlp-29, nlp-31, nlp-34, cnc-1, cnc-2 and cnc-4) in the epidermis. In addition, up-regulates nlp-29 expression upon physical wounding and in response to phorbol ester PMA treatment. This Caenorhabditis elegans protein is Protein nipi-4.